Here is a 281-residue protein sequence, read N- to C-terminus: 2-dehydro-3-deoxyphosphooctonate aldolase (281 aa).

Belongs to the KdsA family.

It is found in the cytoplasm. The enzyme catalyses D-arabinose 5-phosphate + phosphoenolpyruvate + H2O = 3-deoxy-alpha-D-manno-2-octulosonate-8-phosphate + phosphate. It participates in carbohydrate biosynthesis; 3-deoxy-D-manno-octulosonate biosynthesis; 3-deoxy-D-manno-octulosonate from D-ribulose 5-phosphate: step 2/3. Its pathway is bacterial outer membrane biogenesis; lipopolysaccharide biosynthesis. The sequence is that of 2-dehydro-3-deoxyphosphooctonate aldolase from Pseudomonas fluorescens (strain SBW25).